A 1119-amino-acid chain; its full sequence is SH3 and PX domain-containing protein 2A (1119 aa).

The PX domain occupies 4–128 (RTVLDVKVVD…RFFETKPDDI (125 aa)). 2 consecutive SH3 domains span residues 149–208 (MVLE…SQSG) and 249–308 (SREE…KLKD). 5 disordered regions span residues 388-429 (SSAT…PPRR), 494-595 (APSS…SNPA), 641-815 (SSDD…HESV), 914-941 (NLRS…AMLN), and 957-1004 (RPQS…SSFT). In terms of domain architecture, SH3 3 spans 445–504 (TVEAEYYTIAEFQSSISDGISFRGGQKADVIEKNSGGWWYVQIGDTEGWAPSSYIDKRKK). 2 stretches are compositionally biased toward basic and acidic residues: residues 581–590 (PKPEPRKFEI) and 688–718 (GRAE…DVEI). Over residues 779-802 (TASVVSSEDSTSSRSTSDLSSVYS) the composition is skewed to low complexity. Basic and acidic residues predominate over residues 806–815 (RGGESDHESV). An SH3 4 domain is found at 812-871 (HESVLFRTTDAYERAQESELSFPAGVEVEVLEKQESGWWFVRWGSDEGWVPTFYLEPIKH). Residues 1058–1119 (NLREVYVSIA…VPSNYLERKK (62 aa)) form the SH3 5 domain.

It belongs to the SH3PXD2 family. Tyrosine phosphorylated.

The protein localises to the cytoplasm. It localises to the cell projection. The protein resides in the podosome. Adapter protein involved in invadopodia and podosome formation and extracellular matrix degradation. This Danio rerio (Zebrafish) protein is SH3 and PX domain-containing protein 2A (sh3pxd2a).